We begin with the raw amino-acid sequence, 342 residues long: Elongation factor Ts (342 aa).

The tract at residues 79–82 (TDFV) is involved in Mg(2+) ion dislocation from EF-Tu.

It belongs to the EF-Ts family.

It localises to the cytoplasm. Associates with the EF-Tu.GDP complex and induces the exchange of GDP to GTP. It remains bound to the aminoacyl-tRNA.EF-Tu.GTP complex up to the GTP hydrolysis stage on the ribosome. This is Elongation factor Ts (tsf) from Lactococcus lactis subsp. lactis (strain IL1403) (Streptococcus lactis).